Consider the following 334-residue polypeptide: DNA-directed RNA polymerase subunit alpha (334 aa).

Positions 1 to 232 (MIREKLKVST…DLFIPFLHAE (232 aa)) are alpha N-terminal domain (alpha-NTD). The alpha C-terminal domain (alpha-CTD) stretch occupies residues 267 to 334 (QKEITLKSIF…NILQIENHFV (68 aa)).

The protein belongs to the RNA polymerase alpha chain family. In plastids the minimal PEP RNA polymerase catalytic core is composed of four subunits: alpha, beta, beta', and beta''. When a (nuclear-encoded) sigma factor is associated with the core the holoenzyme is formed, which can initiate transcription.

It localises to the plastid. It is found in the chloroplast. It catalyses the reaction RNA(n) + a ribonucleoside 5'-triphosphate = RNA(n+1) + diphosphate. Its function is as follows. DNA-dependent RNA polymerase catalyzes the transcription of DNA into RNA using the four ribonucleoside triphosphates as substrates. The protein is DNA-directed RNA polymerase subunit alpha of Pisum sativum (Garden pea).